A 359-amino-acid chain; its full sequence is 4-hydroxy-3-methylbut-2-en-1-yl diphosphate synthase (flavodoxin) (359 aa).

[4Fe-4S] cluster contacts are provided by Cys264, Cys267, Cys299, and Glu306.

The protein belongs to the IspG family. The cofactor is [4Fe-4S] cluster.

The catalysed reaction is (2E)-4-hydroxy-3-methylbut-2-enyl diphosphate + oxidized [flavodoxin] + H2O + 2 H(+) = 2-C-methyl-D-erythritol 2,4-cyclic diphosphate + reduced [flavodoxin]. The protein operates within isoprenoid biosynthesis; isopentenyl diphosphate biosynthesis via DXP pathway; isopentenyl diphosphate from 1-deoxy-D-xylulose 5-phosphate: step 5/6. Functionally, converts 2C-methyl-D-erythritol 2,4-cyclodiphosphate (ME-2,4cPP) into 1-hydroxy-2-methyl-2-(E)-butenyl 4-diphosphate. The sequence is that of 4-hydroxy-3-methylbut-2-en-1-yl diphosphate synthase (flavodoxin) from Helicobacter pylori (strain G27).